Reading from the N-terminus, the 274-residue chain is Regulator of G-protein signaling rgs-11 (274 aa).

The RGS domain maps to 137–256; the sequence is SPGLLAASKY…LEDPLYLDLL (120 aa).

In Caenorhabditis elegans, this protein is Regulator of G-protein signaling rgs-11 (rgs-11).